The primary structure comprises 460 residues: ATP synthase subunit beta (460 aa).

Residue Gly-150–Thr-157 participates in ATP binding.

Belongs to the ATPase alpha/beta chains family. F-type ATPases have 2 components, CF(1) - the catalytic core - and CF(0) - the membrane proton channel. CF(1) has five subunits: alpha(3), beta(3), gamma(1), delta(1), epsilon(1). CF(0) has three main subunits: a(1), b(2) and c(9-12). The alpha and beta chains form an alternating ring which encloses part of the gamma chain. CF(1) is attached to CF(0) by a central stalk formed by the gamma and epsilon chains, while a peripheral stalk is formed by the delta and b chains.

It is found in the cell inner membrane. The enzyme catalyses ATP + H2O + 4 H(+)(in) = ADP + phosphate + 5 H(+)(out). Functionally, produces ATP from ADP in the presence of a proton gradient across the membrane. The catalytic sites are hosted primarily by the beta subunits. This is ATP synthase subunit beta from Citrobacter koseri (strain ATCC BAA-895 / CDC 4225-83 / SGSC4696).